The chain runs to 180 residues: D-glycero-beta-D-manno-heptose-1,7-bisphosphate 7-phosphatase (180 aa).

D14 acts as the Nucleophile in catalysis. Mg(2+) contacts are provided by D14 and D16. Residues 14–16 (DRD), 22–25 (NDHY), and 56–59 (TNQS) each bind substrate. The active-site Proton donor is the D16. Residues C95, H97, C110, and H112 each coordinate Zn(2+). Residue 113 to 114 (RK) coordinates substrate. D139 serves as a coordination point for Mg(2+).

This sequence belongs to the gmhB family. As to quaternary structure, monomer. The cofactor is Mg(2+).

The protein localises to the cytoplasm. It catalyses the reaction D-glycero-beta-D-manno-heptose 1,7-bisphosphate + H2O = D-glycero-beta-D-manno-heptose 1-phosphate + phosphate. It functions in the pathway nucleotide-sugar biosynthesis; ADP-L-glycero-beta-D-manno-heptose biosynthesis; ADP-L-glycero-beta-D-manno-heptose from D-glycero-beta-D-manno-heptose 7-phosphate: step 2/4. The protein operates within bacterial outer membrane biogenesis; LPS core biosynthesis. In terms of biological role, converts the D-glycero-beta-D-manno-heptose 1,7-bisphosphate (beta-HBP) intermediate into D-glycero-beta-D-manno-heptose 1-phosphate by removing the phosphate group at the C-7 position. Also catalyzes the dephosphorylation of D-glycero-alpha-D-manno-heptose 1,7-bisphosphate in vitro. The chain is D-glycero-beta-D-manno-heptose-1,7-bisphosphate 7-phosphatase from Rhodopseudomonas palustris (strain ATCC BAA-98 / CGA009).